The primary structure comprises 272 residues: Orotidine 5'-phosphate decarboxylase (272 aa).

The active-site Proton donor is K93.

The protein belongs to the OMP decarboxylase family. Type 2 subfamily.

It catalyses the reaction orotidine 5'-phosphate + H(+) = UMP + CO2. It participates in pyrimidine metabolism; UMP biosynthesis via de novo pathway; UMP from orotate: step 2/2. This Roseiflexus castenholzii (strain DSM 13941 / HLO8) protein is Orotidine 5'-phosphate decarboxylase.